The primary structure comprises 227 residues: Cytochrome c oxidase subunit 2 (227 aa).

Topologically, residues 1-14 (MAYPFQLGLQDATS) are mitochondrial intermembrane. The chain crosses the membrane as a helical span at residues 15 to 45 (PIMEELLHFHDHTLMIVFLISSLVLYIISLM). Residues 46 to 59 (LTTKLTHTSTMDAQ) are Mitochondrial matrix-facing. A helical transmembrane segment spans residues 60–87 (EVETVWTILPAIILILIALPSLRILYMM). Residues 88 to 227 (DEINNPSLTV…YFETWSAVMV (140 aa)) lie on the Mitochondrial intermembrane side of the membrane. Residues H161, C196, E198, C200, H204, and M207 each coordinate Cu cation. E198 lines the Mg(2+) pocket. Y218 is subject to Phosphotyrosine.

The protein belongs to the cytochrome c oxidase subunit 2 family. As to quaternary structure, component of the cytochrome c oxidase (complex IV, CIV), a multisubunit enzyme composed of 14 subunits. The complex is composed of a catalytic core of 3 subunits MT-CO1, MT-CO2 and MT-CO3, encoded in the mitochondrial DNA, and 11 supernumerary subunits COX4I, COX5A, COX5B, COX6A, COX6B, COX6C, COX7A, COX7B, COX7C, COX8 and NDUFA4, which are encoded in the nuclear genome. The complex exists as a monomer or a dimer and forms supercomplexes (SCs) in the inner mitochondrial membrane with NADH-ubiquinone oxidoreductase (complex I, CI) and ubiquinol-cytochrome c oxidoreductase (cytochrome b-c1 complex, complex III, CIII), resulting in different assemblies (supercomplex SCI(1)III(2)IV(1) and megacomplex MCI(2)III(2)IV(2)). Found in a complex with TMEM177, COA6, COX18, COX20, SCO1 and SCO2. Interacts with TMEM177 in a COX20-dependent manner. Interacts with COX20. Interacts with COX16. Requires Cu cation as cofactor.

It is found in the mitochondrion inner membrane. It carries out the reaction 4 Fe(II)-[cytochrome c] + O2 + 8 H(+)(in) = 4 Fe(III)-[cytochrome c] + 2 H2O + 4 H(+)(out). Functionally, component of the cytochrome c oxidase, the last enzyme in the mitochondrial electron transport chain which drives oxidative phosphorylation. The respiratory chain contains 3 multisubunit complexes succinate dehydrogenase (complex II, CII), ubiquinol-cytochrome c oxidoreductase (cytochrome b-c1 complex, complex III, CIII) and cytochrome c oxidase (complex IV, CIV), that cooperate to transfer electrons derived from NADH and succinate to molecular oxygen, creating an electrochemical gradient over the inner membrane that drives transmembrane transport and the ATP synthase. Cytochrome c oxidase is the component of the respiratory chain that catalyzes the reduction of oxygen to water. Electrons originating from reduced cytochrome c in the intermembrane space (IMS) are transferred via the dinuclear copper A center (CU(A)) of subunit 2 and heme A of subunit 1 to the active site in subunit 1, a binuclear center (BNC) formed by heme A3 and copper B (CU(B)). The BNC reduces molecular oxygen to 2 water molecules using 4 electrons from cytochrome c in the IMS and 4 protons from the mitochondrial matrix. This chain is Cytochrome c oxidase subunit 2 (MT-CO2), found in Lycalopex sechurae (Sechuran desert fox).